The following is a 484-amino-acid chain: Dolichyl-P-Man:Man5GlcNAc2-PP-dolichol alpha-1,3-mannosyltransferase l(2)not2 (484 aa).

Residues 1-43 (MAPPKAASHRPAVRRKKSGTLVDSILDKYLNVRFFKYLLLEPA) are Cytoplasmic-facing. A helical transmembrane segment spans residues 44–64 (ALPIVGLFVLLAELVINVVVI). Over 65–97 (QRVPYTEIDWVAYMQECEGFLNGTTNYSLLRGD) the chain is Lumenal. Residues 98-118 (TGPLVYPAAFVYIYSALYYVT) form a helical membrane-spanning segment. The Cytoplasmic segment spans residues 119 to 125 (SHGTNVR). A helical transmembrane segment spans residues 126–146 (LAQYIFAGIYLLQLALVLRLY). Residues 147–171 (SKSRKVPPYVLVLSAFTSYRIHSIY) are Lumenal-facing. A helical transmembrane segment spans residues 172–192 (VLRLFNDPVAVLLLYAALNLF). At 193–211 (LDRRWTLGSTFFSLAVGVK) the chain is on the cytoplasmic side. A helical transmembrane segment spans residues 212 to 232 (MNILLFAPALLLFYLANLGLL). Residue Arg-233 is a topological domain, lumenal. Residues 234–254 (TILQLAVCGVIQLLLGAPFLL) traverse the membrane as a helical segment. Residues 255-294 (THPVEYLRGSFDLGRIFEHKWTVNYRFLSRDVFENRTFHV) lie on the Cytoplasmic side of the membrane. Residues 295–315 (SLLGLHLLLLLAFAKPTWTFF) form a helical membrane-spanning segment. The Lumenal segment spans residues 316–403 (QSYVRLRRIE…YGIHFDRCTQ (88 aa)). Residues 404–424 (LALLPFFLCNLVGVACSRSLH) form a helical membrane-spanning segment. Residues 425–426 (YQ) lie on the Cytoplasmic side of the membrane. The chain crosses the membrane as a helical span at residues 427–447 (FYVWYFHSLPYLAWSTPYSLG). At 448–484 (VRCLILGLIEYCWNTYPSTNFSSAALHFTHIIPPYQL) the chain is on the lumenal side.

It belongs to the glycosyltransferase ALG3 family.

It localises to the endoplasmic reticulum membrane. The enzyme catalyses an alpha-D-Man-(1-&gt;2)-alpha-D-Man-(1-&gt;2)-alpha-D-Man-(1-&gt;3)-[alpha-D-Man-(1-&gt;6)]-beta-D-Man-(1-&gt;4)-beta-D-GlcNAc-(1-&gt;4)-alpha-D-GlcNAc-diphospho-di-trans,poly-cis-dolichol + a di-trans,poly-cis-dolichyl beta-D-mannosyl phosphate = an alpha-D-Man-(1-&gt;2)-alpha-D-Man-(1-&gt;2)-alpha-D-Man-(1-&gt;3)-[alpha-D-Man-(1-&gt;3)-alpha-D-Man-(1-&gt;6)]-beta-D-Man-(1-&gt;4)-beta-D-GlcNAc-(1-&gt;4)-alpha-D-GlcNAc-diphospho-di-trans,poly-cis-dolichol + a di-trans,poly-cis-dolichyl phosphate + H(+). It functions in the pathway protein modification; protein glycosylation. In terms of biological role, probable alpha-1,3-mannosyltransferase involved in the N-glycosylation pathway. Involved in glycosylation of the TNF receptor grnd, regulating its ligand affinity. Required for normal epithelial growth and architecture. Suppressor of JNK-dependent intestinal stem cell proliferation. This Drosophila melanogaster (Fruit fly) protein is Dolichyl-P-Man:Man5GlcNAc2-PP-dolichol alpha-1,3-mannosyltransferase l(2)not2.